Consider the following 425-residue polypeptide: Acyl-lipid (8-3)-desaturase (425 aa).

A disordered region spans residues 1-25 (MPPRDSYSYAAPPSAQLHEVDTPQE). The 76-residue stretch at 18-93 (HEVDTPQEHD…SRPVHKGYSP (76 aa)) folds into the Cytochrome b5 heme-binding domain. His47 and His69 together coordinate heme. The chain crosses the membrane as a helical span at residues 134-154 (VAGAALIWHGYTFAGIAMLGV). A Histidine box-1 motif is present at residues 164-168 (HEGGH). A helical transmembrane segment spans residues 175–197 (IAFDRAIQVACYGLGCGMSGAWW). The Histidine box-2 signature appears at 201 to 206 (HNKHHA). Helical transmembrane passes span 241-261 (WLSM…ALGW) and 297-317 (GAGY…MYIF). A Histidine box-3 motif is present at residues 365-369 (QIEHH).

Belongs to the fatty acid desaturase type 1 family. It depends on Fe(2+) as a cofactor.

The protein localises to the membrane. It catalyses the reaction an (8Z,11Z,14Z)-icosatrienoyl-containing glycerolipid + 2 Fe(II)-[cytochrome b5] + O2 + 2 H(+) = (5Z,8Z,11Z,14Z)-eicosatetraenoyl-containing glycerolipid + 2 Fe(III)-[cytochrome b5] + 2 H2O. The enzyme catalyses an (8Z,11Z,14Z,17Z)-eicosatetraenoyl-containing glycerolipid + 2 Fe(II)-[cytochrome b5] + O2 + 2 H(+) = a (5Z,8Z,11Z,14Z,17Z)-eicosapentaenoyl-containing glycerolipid + 2 Fe(III)-[cytochrome b5] + 2 H2O. Its function is as follows. Fatty acid desaturase that introduces a cis double bond at the 5-position in 20-carbon polyunsaturated fatty acids incorporated in a glycerolipid that contain a Delta(8) double bond. In Rebecca salina (Marine microalga), this protein is Acyl-lipid (8-3)-desaturase.